A 1430-amino-acid chain; its full sequence is ABC transporter eupT (1430 aa).

The disordered stretch occupies residues Met-1 to Gln-26. The region spanning Leu-112–Ala-368 is the ABC transporter 1 domain. N-linked (GlcNAc...) asparagine glycosylation is present at Asn-292. Helical transmembrane passes span Trp-476–Phe-496, Val-511–Leu-531, Val-557–Phe-577, Gly-586–Phe-606, and Met-620–Val-640. Asn-684 carries an N-linked (GlcNAc...) asparagine glycan. A helical transmembrane segment spans residues Val-707–Tyr-727. The ABC transporter 2 domain maps to Phe-789–Gly-1032. Gly-825–Thr-832 contacts ATP. Asn-1019 is a glycosylation site (N-linked (GlcNAc...) asparagine). Transmembrane regions (helical) follow at residues Ile-1133–Ser-1153, Leu-1213–Phe-1233, Leu-1249–Ile-1269, Gly-1278–Ser-1298, Phe-1305–Thr-1325, and Phe-1400–Ile-1420.

It belongs to the ABC transporter superfamily. ABCG family. PDR (TC 3.A.1.205) subfamily.

Its subcellular location is the cell membrane. In terms of biological role, ABC transporter; part of the gene cluster that mediates the biosynthesis of eupenifeldin, a bistropolone meroterpenoid that acts as an antitumor agent. The sequence is that of ABC transporter eupT from Phoma sp.